The sequence spans 536 residues: Casein kinase I homolog RAG8 (536 aa).

Polar residues predominate over residues 26–42 (HSTQVLHGSGQHGMQPS). Residues 26–68 (HSTQVLHGSGQHGMQPSGNNVLNGLANGATGLQSSASSTSTRD) are disordered. Residues 43–65 (GNNVLNGLANGATGLQSSASSTS) are compositionally biased toward low complexity. The region spanning 77 to 361 (YKIGKKIGEG…QKLDGEYDWM (285 aa)) is the Protein kinase domain. ATP contacts are provided by residues 83–91 (IGEGSFGVL) and K106. D196 functions as the Proton acceptor in the catalytic mechanism. Composition is skewed to polar residues over residues 407-420 (NNLN…QSHS) and 427-436 (DLTQGVSNAP). The tract at residues 407–524 (NNLNGSNVPL…NGKVQVADSN (118 aa)) is disordered. 2 stretches are compositionally biased toward low complexity: residues 437-453 (QQPQ…QHTQ) and 463-514 (AYKQ…NQPQ). Residues C535 and C536 are each lipidated (S-palmitoyl cysteine).

Belongs to the protein kinase superfamily. CK1 Ser/Thr protein kinase family. Casein kinase I subfamily.

The enzyme catalyses L-seryl-[protein] + ATP = O-phospho-L-seryl-[protein] + ADP + H(+). It carries out the reaction L-threonyl-[protein] + ATP = O-phospho-L-threonyl-[protein] + ADP + H(+). Casein kinases are operationally defined by their preferential utilization of acidic proteins such as caseins as substrates. The protein is Casein kinase I homolog RAG8 (RAG8) of Kluyveromyces lactis (strain ATCC 8585 / CBS 2359 / DSM 70799 / NBRC 1267 / NRRL Y-1140 / WM37) (Yeast).